Reading from the N-terminus, the 136-residue chain is uncharacterized protein (136 aa).

This is an uncharacterized protein from Pasteurella multocida (strain Pm70).